We begin with the raw amino-acid sequence, 182 residues long: Mitochondrial FAD-linked sulfhydryl oxidase erv1 (182 aa).

The ERV/ALR sulfhydryl oxidase domain occupies 75-177 (RLPDVAELGR…FNCQVWSKKA (103 aa)). FAD is bound by residues 81-87 (ELGRSTW), H91, and Y120. 2 disulfide bridges follow: C122-C125 and C153-C170. Residues 153-165 (CEAHNDVNERLGK) and 176-177 (KA) each bind FAD.

FAD serves as cofactor.

It is found in the mitochondrion intermembrane space. The enzyme catalyses 2 R'C(R)SH + O2 = R'C(R)S-S(R)CR' + H2O2. In terms of biological role, FAD-dependent sulfhydryl oxidase that catalyzes disulfide bond formation. Required for the import and folding of small cysteine-containing proteins in the mitochondrial intermembrane space (IMS). In Schizosaccharomyces pombe (strain 972 / ATCC 24843) (Fission yeast), this protein is Mitochondrial FAD-linked sulfhydryl oxidase erv1 (erv1).